The primary structure comprises 396 residues: Methylthioribose kinase (396 aa).

ATP is bound by residues N44, K61, and 115–117; that span reads EDL. D233 lines the substrate pocket. 250-252 lines the ATP pocket; it reads DPE. R340 contributes to the substrate binding site.

It belongs to the methylthioribose kinase family. Homodimer.

It carries out the reaction 5-(methylsulfanyl)-D-ribose + ATP = 5-(methylsulfanyl)-alpha-D-ribose 1-phosphate + ADP + H(+). It functions in the pathway amino-acid biosynthesis; L-methionine biosynthesis via salvage pathway; S-methyl-5-thio-alpha-D-ribose 1-phosphate from S-methyl-5'-thioadenosine (hydrolase route): step 2/2. Its function is as follows. Catalyzes the phosphorylation of methylthioribose into methylthioribose-1-phosphate. In Geobacillus kaustophilus (strain HTA426), this protein is Methylthioribose kinase.